A 558-amino-acid chain; its full sequence is Putative transposase for insertion sequence IS1162 (558 aa).

In terms of domain architecture, HTH IS408-type spans 11–93 (IKECLRLKFE…PDLITIHREL (83 aa)). Residues 23–44 (LSHEKIARALQLSKGVVSKYVT) constitute a DNA-binding region (H-T-H motif). The region spanning 139–336 (QQHRAGEKLF…HPYEVVTFKR (198 aa)) is the Integrase catalytic domain. Residues 486–558 (QGLDQQPLPK…AAGQPQPELR (73 aa)) form a disordered region.

This sequence belongs to the transposase IS21/IS408/IS1162 family.

Functionally, required for the transposition of the insertion element. In Pseudomonas fluorescens, this protein is Putative transposase for insertion sequence IS1162.